A 279-amino-acid chain; its full sequence is Movement protein (279 aa).

It belongs to the cucumovirus movement protein family.

Its subcellular location is the host cell junction. The protein resides in the host plasmodesma. Its function is as follows. Transports viral genome to neighboring plant cells directly through plasmosdesmata, without any budding. The movement protein allows efficient cell to cell propagation, by bypassing the host cell wall barrier. Acts by forming a tubular structure at the host plasmodesmata, enlarging it enough to allow free passage of virion capsids. In Cucumber mosaic virus (strain Kin) (CMV), this protein is Movement protein.